A 389-amino-acid chain; its full sequence is Oxytocin receptor (389 aa).

The disordered stretch occupies residues 1-27 (MEGELAANWSTEAVNSSAAPPGAEGNC). Residues 1 to 38 (MEGELAANWSTEAVNSSAAPPGAEGNCTAGPPRRNEAL) lie on the Extracellular side of the membrane. N-linked (GlcNAc...) asparagine glycans are attached at residues N8, N15, and N26. A compositionally biased stretch (polar residues) spans 8-18 (NWSTEAVNSSA). A helical transmembrane segment spans residues 39–63 (ARVEVAVLCLILFLALSGNACVLLA). The Cytoplasmic segment spans residues 64–74 (LRTTRHKHSRL). A helical membrane pass occupies residues 75-97 (FFFMKHLSIADLVVAVFQVLPQL). Residues 98–113 (LWDITFRFYGPDLLCR) lie on the Extracellular side of the membrane. A disulfide bridge links C112 with C187. Residues 114–135 (LVKYLQVVGMFASTYLLLLMSL) form a helical membrane-spanning segment. Residues 136-154 (DRCLAICQPLRSLRRRTDR) lie on the Cytoplasmic side of the membrane. A helical membrane pass occupies residues 155–175 (LAVLATWLGCLVASAPQVHIF). The Extracellular segment spans residues 176–202 (SLREVADGVFDCWAVFIQPWGPKAYIT). A helical transmembrane segment spans residues 203-225 (WITLAVYIVPVIVLAACYGLISF). Over 226–275 (KIWQNLRLKTAAAAAAEAPEGAAAGDGGRMALARVSSVKLISKAKIRTVK) the chain is Cytoplasmic. A helical membrane pass occupies residues 276 to 294 (MTFIIVLAFIVCWTPFFFV). Topologically, residues 295-309 (QMWSVWDANAPKEAS) are extracellular. The chain crosses the membrane as a helical span at residues 310–332 (AFIIVMLLASLNSCCNPWIYMLF). Topologically, residues 333–389 (TGHLFHELVQRFLCCSASYLKGNRLGETSTSKKSNSSSFVLSHRSSSQRSCSQPSTA) are cytoplasmic. The interval 358 to 389 (GETSTSKKSNSSSFVLSHRSSSQRSCSQPSTA) is disordered. The segment covering 360–389 (TSTSKKSNSSSFVLSHRSSSQRSCSQPSTA) has biased composition (low complexity). Phosphoserine is present on residues S366 and S368.

Belongs to the G-protein coupled receptor 1 family. Vasopressin/oxytocin receptor subfamily.

Its subcellular location is the cell membrane. Its function is as follows. Receptor for oxytocin. The activity of this receptor is mediated by G proteins which activate a phosphatidylinositol-calcium second messenger system. In Macaca mulatta (Rhesus macaque), this protein is Oxytocin receptor (OXTR).